The primary structure comprises 180 residues: uncharacterized protein (180 aa).

Residues 17–80 form the HTH dtxR-type domain; sequence RRSRILHYLM…LIPNMGVRLT (64 aa).

Belongs to the DtxR/MntR family.

This is an uncharacterized protein from Aeropyrum pernix (strain ATCC 700893 / DSM 11879 / JCM 9820 / NBRC 100138 / K1).